The primary structure comprises 466 residues: Ras-GEF domain-containing family member 1C (466 aa).

The disordered stretch occupies residues 1–37 (MPQTLSASDMVTPGSLSPPPTEPTDGEQAGQPLLDGA). An N-terminal Ras-GEF domain is found at 34–164 (LDGAPSSASL…LLQALHQKLA (131 aa)). Residues 200–446 (DPYTLAQQLT…YLASYESESP (247 aa)) enclose the Ras-GEF domain.

Functionally, guanine nucleotide exchange factor (GEF). In Homo sapiens (Human), this protein is Ras-GEF domain-containing family member 1C (RASGEF1C).